We begin with the raw amino-acid sequence, 1240 residues long: DNA excision repair protein ERCC-6-like (1240 aa).

Serine 14 is subject to Phosphoserine. A TPR 1 repeat occupies 21–54 (YLRYVQEAKEAAKNGDLEESLKLFNLAKDIFPTK). The Helicase ATP-binding domain maps to 110–278 (SLYKDGRKGG…WSLFDFACQG (169 aa)). Residue 123–130 (DDMGLGKT) coordinates ATP. The short motif at 229-232 (DEAH) is the DEAH box element. In terms of domain architecture, Helicase C-terminal spans 467–631 (FLMSLLERLQ…FTKQELKELF (165 aa)). Residues 736–760 (FPSQQKKKGTEFNKPQPQPSRLLTK) are disordered. Positions 748-760 (NKPQPQPSRLLTK) are enriched in polar residues. Phosphoserine is present on residues serine 755 and serine 773. A disordered region spans residues 778–813 (DQSAESEPQEHSEVHDVTSLQGSHHFNSTSDAGTIA). The segment covering 795-809 (TSLQGSHHFNSTSDA) has biased composition (polar residues). Phosphoserine is present on serine 821. Positions 845–879 (QKKGLQASPGQEAPSENLGSFHYLPRESSKASLGP) are disordered. Serine 966, serine 998, serine 1001, and serine 1021 each carry phosphoserine. Residues 974–1085 (KEKSLQSPAA…EVNTSLHSRR (112 aa)) are disordered. Residues 978-998 (LQSPAANSRAKSALTLSLDSS) are compositionally biased toward polar residues. Polar residues predominate over residues 1049–1065 (SVKQFDASTPQSGSNPS). Threonine 1057 is modified (phosphothreonine). Phosphoserine is present on residues serine 1092 and serine 1112. The span at 1104 to 1117 (MEERLDNSSEEESE) shows a compositional bias: acidic residues. The interval 1104-1185 (MEERLDNSSE…MPDPPQDLAV (82 aa)) is disordered. Polar residues predominate over residues 1135–1165 (EQPSGATLASGNKSSNLTMSEPTSPAPQSSP). Serine 1172 carries the phosphoserine modification. The TPR 2 repeat unit spans residues 1191 to 1224 (YESLVARGKELKECGKIQEALNCLVKALDIKSAD).

Belongs to the SNF2/RAD54 helicase family. Interacts with PLK1, which phosphorylates it. Both proteins are mutually dependent on each other for correct subcellular localization. Interacts (via N-terminal TPR repeat) with BEND3 (via BEN domains 1 and 3); the interaction is direct. In terms of processing, phosphorylation by PLK1 prevents the association with chromosome arms and restricts its localization to the kinetochore-centromere region. As to expression, expressed mainly in the neural tube and heart of 10.5 dpc embryo. Significantly down-regulated after alcohol exposure in embryonic brain and heart, but not in embryonic kidney, liver, or lung.

Its subcellular location is the chromosome. The protein localises to the centromere. The protein resides in the kinetochore. The enzyme catalyses ATP + H2O = ADP + phosphate + H(+). In terms of biological role, DNA helicase that acts as a tension sensor that associates with catenated DNA which is stretched under tension until it is resolved during anaphase. Functions as ATP-dependent DNA translocase. Can promote Holliday junction branch migration (in vitro). This chain is DNA excision repair protein ERCC-6-like (Ercc6l), found in Mus musculus (Mouse).